The primary structure comprises 270 residues: 3-methyl-2-oxobutanoate hydroxymethyltransferase (270 aa).

Positions 50 and 89 each coordinate Mg(2+). Residues 50–51 (DS), Asp-89, and Lys-118 each bind 3-methyl-2-oxobutanoate. Mg(2+) is bound at residue Glu-120. The active-site Proton acceptor is the Glu-187.

It belongs to the PanB family. Homodecamer; pentamer of dimers. The cofactor is Mg(2+).

Its subcellular location is the cytoplasm. It carries out the reaction 3-methyl-2-oxobutanoate + (6R)-5,10-methylene-5,6,7,8-tetrahydrofolate + H2O = 2-dehydropantoate + (6S)-5,6,7,8-tetrahydrofolate. It participates in cofactor biosynthesis; (R)-pantothenate biosynthesis; (R)-pantoate from 3-methyl-2-oxobutanoate: step 1/2. In terms of biological role, catalyzes the reversible reaction in which hydroxymethyl group from 5,10-methylenetetrahydrofolate is transferred onto alpha-ketoisovalerate to form ketopantoate. This Helicobacter pylori (strain G27) protein is 3-methyl-2-oxobutanoate hydroxymethyltransferase.